Here is a 360-residue protein sequence, read N- to C-terminus: MGAPLLSPGWGAGAAGRRWWMLLAPLLPALLLVRPAGALVEGLYCGTRDCYEVLGVSRSAGKAEIARAYRQLARRYHPDRYRPQPGDEGPGRTPQSAEEAFLLVATAYETLKDEETRKDYDYMLDHPEEYYSHYYHYYSRRLAPKVDVRVVILVSVCAISVFQFFSWWNSYNKAISYLATVPKYRIQATEIAKQQGLLKKAKEKGKNKKSKEEIRDEEENIIKNIIKSKIDIKGGYQKPQICDLLLFQIILAPFHLCSYIVWYCRWIYNFNIKGKEYGEEERLYIIRKSMKMSKSQFDSLEDHQKETFLKRELWIKENYEVYKQEQEEELKKKLANDPRWKRYRRWMKNEGPGRLTFVDD.

Residues 20 to 40 (WMLLAPLLPALLLVRPAGALV) traverse the membrane as a helical segment. A J domain is found at 49-124 (DCYEVLGVSR…ETRKDYDYML (76 aa)). The next 2 membrane-spanning stretches (helical) occupy residues 150–170 (VVIL…WWNS) and 244–264 (LLLF…VWYC).

The protein belongs to the DNAJC25 family.

Its subcellular location is the membrane. The sequence is that of DnaJ homolog subfamily C member 25 (DNAJC25) from Homo sapiens (Human).